A 503-amino-acid polypeptide reads, in one-letter code: Aromatase (503 aa).

2 helical membrane-spanning segments follow: residues E19–W39 and G51–G71. Positions E294 to Q324 are substrate-binding pocket. Substrate-binding residues include D309 and M374. C437 contributes to the heme binding site.

It belongs to the cytochrome P450 family. The cofactor is heme. As to expression, expressed in placenta. Highly expressed in follicles (0 hour:hCG), followed by a drop (12-24 hour:hCG) and by an increase (30-39 hour:hCG). Highly expressed in corpora lutea. Also expressed in granulosa cell layer. Not expressed in theca interna.

The protein resides in the endoplasmic reticulum membrane. The protein localises to the microsome membrane. It catalyses the reaction testosterone + 3 reduced [NADPH--hemoprotein reductase] + 3 O2 = 17beta-estradiol + formate + 3 oxidized [NADPH--hemoprotein reductase] + 4 H2O + 4 H(+). It carries out the reaction androst-4-ene-3,17-dione + 3 reduced [NADPH--hemoprotein reductase] + 3 O2 = estrone + formate + 3 oxidized [NADPH--hemoprotein reductase] + 4 H2O + 4 H(+). The catalysed reaction is androst-4-ene-3,17-dione + reduced [NADPH--hemoprotein reductase] + O2 = 19-hydroxyandrost-4-ene-3,17-dione + oxidized [NADPH--hemoprotein reductase] + H2O + H(+). The enzyme catalyses 19-hydroxyandrost-4-ene-3,17-dione + reduced [NADPH--hemoprotein reductase] + O2 = 19-oxo-androst-4-ene-3,17-dione + oxidized [NADPH--hemoprotein reductase] + 2 H2O + H(+). It catalyses the reaction 19-oxo-androst-4-ene-3,17-dione + reduced [NADPH--hemoprotein reductase] + O2 = estrone + formate + oxidized [NADPH--hemoprotein reductase] + H2O + 2 H(+). It carries out the reaction estrone + reduced [NADPH--hemoprotein reductase] + O2 = 2-hydroxyestrone + oxidized [NADPH--hemoprotein reductase] + H2O + H(+). The catalysed reaction is 17beta-hydroxy-5alpha-androstan-3-one + reduced [NADPH--hemoprotein reductase] + O2 = 17beta,19-dihydroxy-3-oxo-5alpha-androstanone + oxidized [NADPH--hemoprotein reductase] + H2O + H(+). The enzyme catalyses 17beta,19-dihydroxy-3-oxo-5alpha-androstanone + reduced [NADPH--hemoprotein reductase] + O2 = 17beta-hydroxy-3,19-dioxo-5alpha-androstanone + oxidized [NADPH--hemoprotein reductase] + 2 H2O + H(+). It catalyses the reaction 17beta-hydroxy-3,19-dioxo-5alpha-androstanone + reduced [NADPH--hemoprotein reductase] + O2 = 17beta-hydroxy-3-oxo-19-nor-5alpha-androst-1-ene + formate + oxidized [NADPH--hemoprotein reductase] + H2O + 2 H(+). Its pathway is steroid hormone biosynthesis. A cytochrome P450 monooxygenase that catalyzes the conversion of C19 androgens, androst-4-ene-3,17-dione (androstenedione) and testosterone to the C18 estrogens, estrone and estradiol, respectively. Catalyzes three successive oxidations of C19 androgens: two conventional oxidations at C19 yielding 19-hydroxy and 19-oxo/19-aldehyde derivatives, followed by a third oxidative aromatization step that involves C1-beta hydrogen abstraction combined with cleavage of the C10-C19 bond to yield a phenolic A ring and formic acid. Alternatively, the third oxidative reaction yields a 19-norsteroid and formic acid. Converts dihydrotestosterone to delta1,10-dehydro 19-nordihydrotestosterone and may play a role in homeostasis of this potent androgen. Also displays 2-hydroxylase activity toward estrone. Mechanistically, uses molecular oxygen inserting one oxygen atom into a substrate, and reducing the second into a water molecule, with two electrons provided by NADPH via cytochrome P450 reductase (CPR; NADPH-ferrihemoprotein reductase). This is Aromatase (CYP19A1) from Equus caballus (Horse).